The sequence spans 97 residues: Co-chaperonin GroES (97 aa).

Belongs to the GroES chaperonin family. Heptamer of 7 subunits arranged in a ring. Interacts with the chaperonin GroEL.

The protein localises to the cytoplasm. In terms of biological role, together with the chaperonin GroEL, plays an essential role in assisting protein folding. The GroEL-GroES system forms a nano-cage that allows encapsulation of the non-native substrate proteins and provides a physical environment optimized to promote and accelerate protein folding. GroES binds to the apical surface of the GroEL ring, thereby capping the opening of the GroEL channel. The sequence is that of Co-chaperonin GroES from Pseudomonas putida (strain GB-1).